We begin with the raw amino-acid sequence, 188 residues long: Elongation factor P (188 aa).

Belongs to the elongation factor P family.

The protein localises to the cytoplasm. The protein operates within protein biosynthesis; polypeptide chain elongation. Its function is as follows. Involved in peptide bond synthesis. Stimulates efficient translation and peptide-bond synthesis on native or reconstituted 70S ribosomes in vitro. Probably functions indirectly by altering the affinity of the ribosome for aminoacyl-tRNA, thus increasing their reactivity as acceptors for peptidyl transferase. This is Elongation factor P from Malacoplasma penetrans (strain HF-2) (Mycoplasma penetrans).